A 324-amino-acid polypeptide reads, in one-letter code: D-alanine--D-alanine ligase (324 aa).

An ATP-grasp domain is found at 121-321 (NQYLKAFGVR…IKDVMTDIIE (201 aa)). Position 149-204 (149-204 (VEKIGLPCFIKPNLGGSSFGVTKVKTREQIQPAIAKAFSEAEEVMIEAFMGGTELT)) interacts with ATP. Mg(2+) contacts are provided by D275, E288, and N290.

Belongs to the D-alanine--D-alanine ligase family. It depends on Mg(2+) as a cofactor. Requires Mn(2+) as cofactor.

It is found in the cytoplasm. It catalyses the reaction 2 D-alanine + ATP = D-alanyl-D-alanine + ADP + phosphate + H(+). The protein operates within cell wall biogenesis; peptidoglycan biosynthesis. Its function is as follows. Cell wall formation. This Bacteroides fragilis (strain ATCC 25285 / DSM 2151 / CCUG 4856 / JCM 11019 / LMG 10263 / NCTC 9343 / Onslow / VPI 2553 / EN-2) protein is D-alanine--D-alanine ligase.